The sequence spans 328 residues: Serine/threonine-protein phosphatase PP2A-2 catalytic subunit (328 aa).

Residues aspartate 76, histidine 78, aspartate 104, and asparagine 136 each coordinate Mn(2+). The active-site Proton donor is histidine 137. Histidine 186 and histidine 260 together coordinate Mn(2+). Leucine 328 carries the leucine methyl ester modification.

It belongs to the PPP phosphatase family. PP-2A subfamily. It depends on Mn(2+) as a cofactor.

The enzyme catalyses O-phospho-L-seryl-[protein] + H2O = L-seryl-[protein] + phosphate. It catalyses the reaction O-phospho-L-threonyl-[protein] + H2O = L-threonyl-[protein] + phosphate. This is Serine/threonine-protein phosphatase PP2A-2 catalytic subunit (PP2A-2) from Blumeria hordei (Barley powdery mildew).